The following is a 577-amino-acid chain: Aspartate--tRNA ligase (577 aa).

An L-aspartate-binding site is contributed by E169. The interval 193–196 is aspartate; it reads QLYK. R215 is an L-aspartate binding site. ATP-binding positions include 215-217 and Q224; that span reads RDE. Residue H440 participates in L-aspartate binding. E474 is a binding site for ATP. R481 provides a ligand contact to L-aspartate. 526-529 is a binding site for ATP; it reads GIDR.

It belongs to the class-II aminoacyl-tRNA synthetase family. Type 1 subfamily. As to quaternary structure, homodimer.

The protein resides in the cytoplasm. The enzyme catalyses tRNA(Asp) + L-aspartate + ATP = L-aspartyl-tRNA(Asp) + AMP + diphosphate. Functionally, catalyzes the attachment of L-aspartate to tRNA(Asp) in a two-step reaction: L-aspartate is first activated by ATP to form Asp-AMP and then transferred to the acceptor end of tRNA(Asp). This Mesoplasma florum (strain ATCC 33453 / NBRC 100688 / NCTC 11704 / L1) (Acholeplasma florum) protein is Aspartate--tRNA ligase.